An 86-amino-acid polypeptide reads, in one-letter code: Neurotoxin LmNaTx35.2 (86 aa).

The N-terminal stretch at 1–21 is a signal peptide; it reads MQLKIQLLMLVLMTVLTGVLG. The LCN-type CS-alpha/beta domain occupies 22–85; that stretch reads KDGYVVHEDT…VYGDKGTYCW (64 aa). Intrachain disulfides connect cysteine 33-cysteine 84, cysteine 37-cysteine 60, cysteine 46-cysteine 65, and cysteine 50-cysteine 67.

It belongs to the long (4 C-C) scorpion toxin superfamily. Sodium channel inhibitor family. Alpha subfamily. As to expression, expressed by the venom gland.

Its subcellular location is the secreted. Functionally, binds voltage-independently at site-3 of voltage-gated sodium channels (Nav) and inhibits the inactivation of the activated channels, thereby blocking neuronal transmission. The chain is Neurotoxin LmNaTx35.2 from Lychas mucronatus (Chinese swimming scorpion).